The chain runs to 391 residues: S-adenosylmethionine synthase (391 aa).

Histidine 14 contacts ATP. Aspartate 16 contacts Mg(2+). Glutamate 42 contributes to the K(+) binding site. L-methionine contacts are provided by glutamate 55 and glutamine 98. The tract at residues 98–108 (QSVDIAIGVDE) is flexible loop. ATP is bound by residues 172–174 (DGK), 238–239 (RF), aspartate 247, 253–254 (RK), alanine 270, and lysine 274. Aspartate 247 lines the L-methionine pocket. Lysine 278 is a binding site for L-methionine.

Belongs to the AdoMet synthase family. As to quaternary structure, homotetramer; dimer of dimers. Requires Mg(2+) as cofactor. The cofactor is K(+).

It is found in the cytoplasm. The catalysed reaction is L-methionine + ATP + H2O = S-adenosyl-L-methionine + phosphate + diphosphate. Its pathway is amino-acid biosynthesis; S-adenosyl-L-methionine biosynthesis; S-adenosyl-L-methionine from L-methionine: step 1/1. Catalyzes the formation of S-adenosylmethionine (AdoMet) from methionine and ATP. The overall synthetic reaction is composed of two sequential steps, AdoMet formation and the subsequent tripolyphosphate hydrolysis which occurs prior to release of AdoMet from the enzyme. The sequence is that of S-adenosylmethionine synthase from Clostridium botulinum (strain Okra / Type B1).